The primary structure comprises 43 residues: Ferritin light chain (43 aa).

The Ferritin-like diiron domain maps to 1 to 43 (MEAALLVEKNLNQALLDLHGLASARGDPHICDFLENHFLDEEV).

The protein belongs to the ferritin family. In terms of assembly, oligomer of 24 subunits. There are two types of subunits: L (light) chain and H (heavy) chain. The major chain can be light or heavy, depending on the species and tissue type. The functional molecule forms a roughly spherical shell with a diameter of 12 nm and contains a central cavity into which the insoluble mineral iron core is deposited. Interacts with NCOA4.

It localises to the cytoplasmic vesicle. The protein resides in the autophagosome. It is found in the cytoplasm. The protein localises to the autolysosome. Its function is as follows. Stores iron in a soluble, non-toxic, readily available form. Important for iron homeostasis. Iron is taken up in the ferrous form and deposited as ferric hydroxides after oxidation. Also plays a role in delivery of iron to cells. Mediates iron uptake in capsule cells of the developing kidney. Delivery to lysosomes by the cargo receptor NCOA4 for autophagic degradation and release or iron. The sequence is that of Ferritin light chain (FTL) from Ovis aries (Sheep).